A 399-amino-acid polypeptide reads, in one-letter code: Ectoine hydrolase (399 aa).

This sequence belongs to the peptidase M24 family.

The protein resides in the cytoplasm. It catalyses the reaction L-ectoine + H2O = (2S)-2-acetamido-4-aminobutanoate. In terms of biological role, involved in the degradation of ectoine, which allows H.elongata to utilize ectoine as both a carbon and a nitrogen source for growth. Catalyzes the hydrolysis of ectoine to N-acetyl-L-2,4-diaminobutyric acid (N-Ac-DABA). It can produce both isoforms N-gamma-acetyl-L-2,4-diaminobutyric acid (N-gamma-Ac-DABA) and N-alpha-acetyl-L-2,4-diaminobutyric acid (-Nalpha-Ac-DABA), however N-alpha-Ac-DABA is the essential substrate for the subsequent catabolic enzyme DoeB. The sequence is that of Ectoine hydrolase from Halomonas elongata (strain ATCC 33173 / DSM 2581 / NBRC 15536 / NCIMB 2198 / 1H9).